The following is a 590-amino-acid chain: 2-hydroxyacyl-CoA lyase (590 aa).

2-hydroxyisobutanoyl-CoA is bound by residues Gly-43, Gln-128, Gln-255, Arg-273–Ser-274, and Arg-362. Gly-410 to Leu-412 is a thiamine diphosphate binding site. Arg-417 contributes to the 2-hydroxyisobutanoyl-CoA binding site. Gly-433 serves as a coordination point for thiamine diphosphate. Residue Asp-460 participates in Mg(2+) binding. Thiamine diphosphate contacts are provided by residues Gly-461–Ala-462 and Asn-487–Ile-492. Positions 487 and 489 each coordinate Mg(2+). Glu-493 functions as the Proton acceptor in the catalytic mechanism. Residue Asp-561–Lys-564 coordinates 2-hydroxyisobutanoyl-CoA. The segment at Leu-566–Ile-590 is C-terminal lid.

Belongs to the TPP enzyme family. In terms of assembly, a homotetramer formed by a dimer of dimers; active sites are located in the dimer interface. Mg(2+) is required as a cofactor. The cofactor is thiamine diphosphate.

It catalyses the reaction 2-hydroxyisobutanoyl-CoA = formyl-CoA + acetone. Its activity is regulated as follows. Activity is stimulated by thiamine diphosphate. In terms of biological role, a lyase that reversibly degrades 2-hydroxyisobutyryl-CoA (2-HIB-CoA) to acetone and formyl-CoA. Probably also cleaves 2-hydroxy-2-methylbutyryl-CoA to butanone and formyl-CoA. Does not act on 2-hydroxy-2-ethylbutyryl-CoA. A C-terminal lid closes the active site upon substrate binding, and with residues Leu-127 and Ile-492 restricts the size of the active site cavity so it can only use short-chain (C4 and C5) acyl substrates. Part of a pathway that allows cells to grow on 2-methylpropane-1,2-diol or 2-hydroxyisobutyric acid (2-HIBA) as a sole carbon source. This chain is 2-hydroxyacyl-CoA lyase, found in Actinomycetospora chiangmaiensis (strain DSM 45062 / JCM 15998 / CCTCC AA 205017 / NBRC 104400 / YIM 0006).